We begin with the raw amino-acid sequence, 339 residues long: Lipoyl synthase (339 aa).

The segment at 13-35 (RPKLDAPARPRHPEKAHRPDTAI) is disordered. [4Fe-4S] cluster-binding residues include C68, C73, C79, C94, C98, C101, and S307. One can recognise a Radical SAM core domain in the interval 80–296 (WEKRHATFMI…ETTAYAKGFL (217 aa)).

The protein belongs to the radical SAM superfamily. Lipoyl synthase family. It depends on [4Fe-4S] cluster as a cofactor.

It is found in the cytoplasm. It carries out the reaction [[Fe-S] cluster scaffold protein carrying a second [4Fe-4S](2+) cluster] + N(6)-octanoyl-L-lysyl-[protein] + 2 oxidized [2Fe-2S]-[ferredoxin] + 2 S-adenosyl-L-methionine + 4 H(+) = [[Fe-S] cluster scaffold protein] + N(6)-[(R)-dihydrolipoyl]-L-lysyl-[protein] + 4 Fe(3+) + 2 hydrogen sulfide + 2 5'-deoxyadenosine + 2 L-methionine + 2 reduced [2Fe-2S]-[ferredoxin]. The protein operates within protein modification; protein lipoylation via endogenous pathway; protein N(6)-(lipoyl)lysine from octanoyl-[acyl-carrier-protein]: step 2/2. Functionally, catalyzes the radical-mediated insertion of two sulfur atoms into the C-6 and C-8 positions of the octanoyl moiety bound to the lipoyl domains of lipoate-dependent enzymes, thereby converting the octanoylated domains into lipoylated derivatives. The protein is Lipoyl synthase of Methylorubrum extorquens (strain CM4 / NCIMB 13688) (Methylobacterium extorquens).